The sequence spans 839 residues: LPS-assembly protein LptD (839 aa).

An N-terminal signal peptide occupies residues 1-21 (MAIGITACVLSLINYQGLAYS).

This sequence belongs to the LptD family. Component of the lipopolysaccharide transport and assembly complex. Interacts with LptE and LptA.

Its subcellular location is the cell outer membrane. Functionally, together with LptE, is involved in the assembly of lipopolysaccharide (LPS) at the surface of the outer membrane. The polypeptide is LPS-assembly protein LptD (Legionella pneumophila (strain Paris)).